The following is a 179-amino-acid chain: MSRVAKAPVIHSANVEVTFVDGVITVKGPKGILTQKINKLVNIQHSKESNKLEFSPASNDPMGWAQAGTARALVRNMVQGVTEGYTVTLELVGVGYRAQSKDKSISLSLGYSHSIEYDLPKGVTVETPNNTTILLKGVDKQVLGQIASEIRAFRPPEPYKGKGVKYAGEQIVRKEAKKK.

The protein belongs to the universal ribosomal protein uL6 family. As to quaternary structure, part of the 50S ribosomal subunit.

In terms of biological role, this protein binds to the 23S rRNA, and is important in its secondary structure. It is located near the subunit interface in the base of the L7/L12 stalk, and near the tRNA binding site of the peptidyltransferase center. The protein is Large ribosomal subunit protein uL6 of Legionella pneumophila (strain Paris).